A 142-amino-acid chain; its full sequence is Probable pilin MJ0832.1 (142 aa).

Residues 1–8 constitute a propeptide that is removed on maturation; sequence MLKFRKRG. The QXSXEXXXL signature appears at 9–17; that stretch reads QISLEFSLL.

Post-translationally, the N-terminus is cleaved by the prepilin peptidase EppA, which recognizes the class III signal sequence.

It localises to the secreted. Its subcellular location is the cell surface. The protein localises to the fimbrium. This is Probable pilin MJ0832.1 from Methanocaldococcus jannaschii (strain ATCC 43067 / DSM 2661 / JAL-1 / JCM 10045 / NBRC 100440) (Methanococcus jannaschii).